We begin with the raw amino-acid sequence, 485 residues long: Ribulose bisphosphate carboxylase large chain 2 (485 aa).

Residues asparagine 125 and threonine 175 each contribute to the substrate site. Lysine 177 (proton acceptor) is an active-site residue. Lysine 179 serves as a coordination point for substrate. The Mg(2+) site is built by lysine 203, aspartate 205, and glutamate 206. Position 203 is an N6-carboxylysine (lysine 203). Histidine 295 functions as the Proton acceptor in the catalytic mechanism. Substrate-binding residues include arginine 296, histidine 328, and serine 380.

This sequence belongs to the RuBisCO large chain family. Type I subfamily. As to quaternary structure, heterohexadecamer of 8 large chains and 8 small chains. Requires Mg(2+) as cofactor.

It carries out the reaction 2 (2R)-3-phosphoglycerate + 2 H(+) = D-ribulose 1,5-bisphosphate + CO2 + H2O. The catalysed reaction is D-ribulose 1,5-bisphosphate + O2 = 2-phosphoglycolate + (2R)-3-phosphoglycerate + 2 H(+). Functionally, ruBisCO catalyzes two reactions: the carboxylation of D-ribulose 1,5-bisphosphate, the primary event in carbon dioxide fixation, as well as the oxidative fragmentation of the pentose substrate. Both reactions occur simultaneously and in competition at the same active site. This chain is Ribulose bisphosphate carboxylase large chain 2, found in Methylibium petroleiphilum (strain ATCC BAA-1232 / LMG 22953 / PM1).